We begin with the raw amino-acid sequence, 131 residues long: Protein DfrA (131 aa).

Belongs to the RutC family.

This Myxococcus xanthus protein is Protein DfrA (dfrA).